The chain runs to 159 residues: Transcriptional repressor NrdR (159 aa).

The span at 1-11 (MQCPSCQNTDS) shows a compositional bias: polar residues. Residues 1 to 20 (MQCPSCQNTDSRVLESRSAD) form a disordered region. A zinc finger lies at 3–34 (CPSCQNTDSRVLESRSADSGRSVRRRRECLNC). An ATP-cone domain is found at 49–139 (INVLKRSGAK…VYRQFNGIND (91 aa)).

The protein belongs to the NrdR family. It depends on Zn(2+) as a cofactor.

Negatively regulates transcription of bacterial ribonucleotide reductase nrd genes and operons by binding to NrdR-boxes. This chain is Transcriptional repressor NrdR, found in Prochlorococcus marinus (strain NATL1A).